The primary structure comprises 200 residues: Dephospho-CoA kinase (200 aa).

In terms of domain architecture, DPCK spans 3-200 (IFGLTGGIGS…LNVNNKCNMD (198 aa)). Residue 11 to 16 (GSGKSL) participates in ATP binding.

It belongs to the CoaE family.

Its subcellular location is the cytoplasm. It catalyses the reaction 3'-dephospho-CoA + ATP = ADP + CoA + H(+). It functions in the pathway cofactor biosynthesis; coenzyme A biosynthesis; CoA from (R)-pantothenate: step 5/5. In terms of biological role, catalyzes the phosphorylation of the 3'-hydroxyl group of dephosphocoenzyme A to form coenzyme A. This is Dephospho-CoA kinase from Ehrlichia canis (strain Jake).